The following is a 376-amino-acid chain: Probable cysteine protease RDL3 (376 aa).

Positions 1 to 27 (MAISFRTLALLTLSVLLISISLGVVTA) are cleaved as a signal peptide. A propeptide spans 28-126 (TESQRNEGEV…ERYQYKEGDV (99 aa)) (activation peptide). An N-linked (GlcNAc...) asparagine glycan is attached at Asn80. Cystine bridges form between Cys149–Cys192 and Cys183–Cys226. The active site involves Cys152. Asn270 carries N-linked (GlcNAc...) asparagine glycosylation. A disulfide bridge links Cys283 with Cys336. Residues His290 and Asn311 contribute to the active site. An N-linked (GlcNAc...) asparagine glycan is attached at Asn349.

The protein belongs to the peptidase C1 family. Expressed in root hairs.

Functionally, probable thiol protease. This chain is Probable cysteine protease RDL3, found in Arabidopsis thaliana (Mouse-ear cress).